A 185-amino-acid chain; its full sequence is Putative manganese efflux pump MntP (185 aa).

A run of 6 helical transmembrane segments spans residues 3–23 (IFTL…VSLA), 40–60 (LLFV…VSVI), 64–84 (FDAY…LRMI), 102–122 (TFSR…AVGI), 124–144 (LSLA…FVLI), and 165–185 (EIFG…DAMM).

It belongs to the MntP (TC 9.B.29) family.

Its subcellular location is the cell inner membrane. Its function is as follows. Probably functions as a manganese efflux pump. This is Putative manganese efflux pump MntP from Elusimicrobium minutum (strain Pei191).